A 135-amino-acid chain; its full sequence is Large ribosomal subunit protein uL16c (135 aa).

The protein belongs to the universal ribosomal protein uL16 family. As to quaternary structure, part of the 50S ribosomal subunit.

It localises to the plastid. The protein localises to the chloroplast. The chain is Large ribosomal subunit protein uL16c from Nandina domestica (Heavenly bamboo).